The chain runs to 528 residues: T-complex protein 1 subunit delta (528 aa).

The protein belongs to the TCP-1 chaperonin family. As to quaternary structure, heterooligomeric complex of about 850 to 900 kDa that forms two stacked rings, 12 to 16 nm in diameter.

It is found in the cytoplasm. Molecular chaperone; assists the folding of proteins upon ATP hydrolysis. Known to play a role, in vitro, in the folding of actin and tubulin. In yeast may play a role in mitotic spindle formation. The chain is T-complex protein 1 subunit delta (CCT4) from Saccharomyces cerevisiae (strain ATCC 204508 / S288c) (Baker's yeast).